Here is a 406-residue protein sequence, read N- to C-terminus: Cholinephosphotransferase 1 (406 aa).

Alanine 2 is subject to N-acetylalanine. The Cytoplasmic segment spans residues 2–62 (AAGAGARPAP…LLQWIPLWMA (61 aa)). Residues 63-83 (PNSITLLGLAINMLTTLVLIS) traverse the membrane as a helical segment. Asparagine 64 is a CDP-choline binding site. The Lumenal portion of the chain corresponds to 84 to 93 (YCPTVTEEAP). The helical transmembrane segment at 94–118 (YWTYLLCALGLFIYQSLDAIDGKQA) threads the bilayer. Positions 111 and 114 each coordinate Mg(2+). Residue arginine 119 coordinates CDP-choline. The Cytoplasmic portion of the chain corresponds to 119–125 (RRTNSCS). A helical membrane pass occupies residues 126 to 150 (PLGELFDHGCDSLSTVFMAVGASIA). Aspartate 132 contributes to the Mg(2+) binding site. Catalysis depends on histidine 133, which acts as the Proton acceptor. Aspartate 136 is a binding site for Mg(2+). Over 151–160 (VRLGTHPDWL) the chain is Lumenal. Residues 161-179 (FFCSFIGMFMFYCAHWQTY) traverse the membrane as a helical segment. Over 180–190 (VSGVLRFGKVD) the chain is Cytoplasmic. A helical membrane pass occupies residues 191–207 (VTEIQIALVIVFVLSTF). The Lumenal portion of the chain corresponds to 208–222 (GGATMWDYTIPILEI). The helical transmembrane segment at 223-248 (KLKILPVLGVVGGAIFSCSNYFHVIL) threads the bilayer. The Cytoplasmic segment spans residues 249–265 (HGGVGKNGSTIAGTSVL). The chain crosses the membrane as a helical span at residues 266–281 (SPGLHIGIIIILAIMI). The Lumenal portion of the chain corresponds to 282–293 (YKKSATNLFEKH). Residues 294–316 (PCLYTLMFGCVFAKVSQKLVIAH) traverse the membrane as a helical segment. Over 317–329 (MTKSELYLQDTVF) the chain is Cytoplasmic. The chain crosses the membrane as a helical span at residues 330-339 (IGPGLLFLDQ). The Lumenal segment spans residues 340–346 (YFNNFVD). Residues 347–376 (EYIVLWIAMVISSLDMMRYFSALCLQISRH) traverse the membrane as a helical segment. The Cytoplasmic portion of the chain corresponds to 377-406 (LHLSIFKTSCHQAPEQVQVLPPKSHQNNMD).

The protein belongs to the CDP-alcohol phosphatidyltransferase class-I family. Requires Mg(2+) as cofactor. Mn(2+) serves as cofactor.

The protein localises to the golgi apparatus membrane. It catalyses the reaction CDP-choline + a 1,2-diacyl-sn-glycerol = a 1,2-diacyl-sn-glycero-3-phosphocholine + CMP + H(+). The catalysed reaction is 1-octadecanoyl-2-(5Z,8Z,11Z,14Z-eicosatetraenoyl)-sn-glycerol + CDP-choline = 1-octadecanoyl-2-(5Z,8Z,11Z,14Z-eicosatetraenoyl)-sn-glycero-3-phosphocholine + CMP + H(+). It carries out the reaction 1-hexadecanoyl-2-(9Z-octadecenoyl)-sn-glycerol + CDP-choline = 1-hexadecanoyl-2-(9Z-octadecenoyl)-sn-glycero-3-phosphocholine + CMP + H(+). The enzyme catalyses 1-hexadecanoyl-2-(4Z,7Z,10Z,13Z,16Z,19Z-docosahexaenoyl)-sn-glycerol + CDP-choline = 1-hexadecanoyl-2-(4Z,7Z,10Z,13Z,16Z,19Z-docosahexaenoyl)-sn-glycero-3-phosphocholine + CMP + H(+). It catalyses the reaction 1,2-dioctanoyl-sn-glycerol + CDP-choline = 1,2-dioctanoyl-sn-glycero-3-phosphocholine + CMP + H(+). It functions in the pathway phospholipid metabolism; phosphatidylcholine biosynthesis; phosphatidylcholine from phosphocholine: step 2/2. Catalyzes the final step of de novo phosphatidylcholine (PC) synthesis, i.e. the transfer of choline phosphate from CDP-choline to the free hydroxyl of a diacylglycerol (DAG), producing a PC. It thereby plays a central role in the formation and maintenance of vesicular membranes. The sequence is that of Cholinephosphotransferase 1 (CHPT1) from Bos taurus (Bovine).